Reading from the N-terminus, the 787-residue chain is MAERRICLSKEAKDGLEFLKRKKLQKMRSDSVNETVGFSTMARSGGDALRPTSASCGMRLRVTSSDTVSKVHGASTVRGGLMKEKVEKLETDDLKWTERLPECPVYRPTKEEFEDPLTYLQKIFPEASKYGICKIVSPLTATVPAGAVLMKEKSNFKFTTRVQPLRLAEWDSDDKVTFFMSGRTYTFRDYEKMANKVFARRYCSGGSLPDSFLEKEFWKEIACGKTETVEYACDVDGSAFSSAPGDPLGSSKWNLNKVSRLPKSTLRLLETSIPGVTEPMLYIGMLFSMFAWHVEDHYLYSINYQHCGASKTWYGIPGSAALKFEKVVKECVYNDDILSTNGEDGAFDVLLGKTTIFPPKTLLDHNVPVYKAVQKPGEFVVTFPRAYHAGFSHGFNCGEAVNFAMGDWFPFGAIASCRYAHLNRVPLLPHEELICKEAMLLNSSSKSENLDLTPTELSGQRSIKTAFVHLIRFLHLARWSLMKSGLCTGLVSNTYGTIVCSLCKRDCYLAFINCECYSHPVCLRHDVKKLDLPCGTTHTLYLRDNIEDMEAAAMKFEKEDGVSDLITTDEDLYKYPSSITLPAAKEDGYTPYSTIYFDFYTEVEMTSHDQLQSGNPVMSYEANASCISSVADDYECSDYVNRRANCSSSSDSKLSEEVACSSSKKTRFFPVVQDEQLVADQESDGSDSECFRVKRRSSLKFENRTVVLDTRESDHHQELKRLKKSHHHEGRYSSSSSVSRQEEEEDELVISNRKETQQQSDVKMQKKRIENHFGGFKRLKVKGLIKP.

The region spanning 103–144 (CPVYRPTKEEFEDPLTYLQKIFPEASKYGICKIVSPLTATVP) is the JmjN domain. The JmjC domain occupies 250-420 (SSKWNLNKVS…FGAIASCRYA (171 aa)). Fe cation contacts are provided by H293, E295, and H388. 8 residues coordinate Zn(2+): C500, C503, C514, C516, H519, C522, H525, and C534. A C4HCHC zinc finger spans residues 500 to 551 (CSLCKRDCYLAFINCECYSHPVCLRHDVKKLDLPCGTTHTLYLRDNIEDMEA). A C5HC2 zinc finger spans residues 500–551 (CSLCKRDCYLAFINCECYSHPVCLRHDVKKLDLPCGTTHTLYLRDNIEDMEA). The FYR N-terminal domain occupies 617–675 (VMSYEANASCISSVADDYECSDYVNRRANCSSSSDSKLSEEVACSSSKKTRFFPVVQDE). An FYR C-terminal domain is found at 677 to 756 (LVADQESDGS…ELVISNRKET (80 aa)). Residues 712-769 (ESDHHQELKRLKKSHHHEGRYSSSSSVSRQEEEEDELVISNRKETQQQSDVKMQKKRI) are disordered. The Nuclear localization signal motif lies at 752 to 759 (NRKETQQQ).

The protein belongs to the JARID1 histone demethylase family. Requires Fe(2+) as cofactor. Mostly expressed in leaves, and, to a lower extent, in inflorescences, roots, siliques and stems.

It localises to the nucleus. It carries out the reaction N(6),N(6),N(6)-trimethyl-L-lysyl(27)-[histone H3] + 2-oxoglutarate + O2 = N(6),N(6)-dimethyl-L-lysyl(27)-[histone H3] + formaldehyde + succinate + CO2. Histone demethylase that demethylates 'Lys-27' (H3K27me) of histone H3 with a specific activity for H3K27me3 and involved in the regulation of gene expression. Acts as a temperature and photoperiod dependent flowering repressor. In Arabidopsis thaliana (Mouse-ear cress), this protein is Lysine-specific demethylase JMJ13.